We begin with the raw amino-acid sequence, 429 residues long: Zinc finger protein 385C (429 aa).

A Matrin-type 1 zinc finger spans residues 77–107 (ISCNICHLRFNSANQAEAHYKGHRHARKLKA). Disordered stretches follow at residues 109 to 224 (EAAK…GRGE), 258 to 295 (GHQG…GPSP), and 311 to 340 (QLKQ…NKLQ). Positions 125 to 146 (TVVSSASPPASGSPGTPQSKGP) are enriched in low complexity. The span at 147-162 (ASPPLGPSLQLPPTPD) shows a compositional bias: pro residues. Over residues 181-193 (CDAAASSSSSSCP) the composition is skewed to low complexity. The Matrin-type 2 zinc-finger motif lies at 225 to 259 (KGRLYCPTCKVTVNSASQLQAHNTGAKHRWMVEGH). Positions 262-284 (APRRGRGRPVSRGGTGHKTKRVI) are enriched in basic residues. The Matrin-type 3 zinc finger occupies 297–327 (FHCALCQLHVNSETQLKQHMSSRRHKDRLAG).

Its subcellular location is the nucleus. In Mus musculus (Mouse), this protein is Zinc finger protein 385C.